The chain runs to 252 residues: Adenosylcobinamide-GDP ribazoletransferase (252 aa).

A run of 7 helical transmembrane segments spans residues 4-24 (LFKG…PYVE), 38-58 (PIIG…INYL), 60-80 (ISIV…TGML), 113-133 (FSVI…HSFL), 141-161 (ILMF…ITII), 190-210 (LVCI…LLIV), and 232-252 (VAGF…CLFT).

The protein belongs to the CobS family. Mg(2+) is required as a cofactor.

The protein localises to the cell membrane. It catalyses the reaction alpha-ribazole + adenosylcob(III)inamide-GDP = adenosylcob(III)alamin + GMP + H(+). The enzyme catalyses alpha-ribazole 5'-phosphate + adenosylcob(III)inamide-GDP = adenosylcob(III)alamin 5'-phosphate + GMP + H(+). It participates in cofactor biosynthesis; adenosylcobalamin biosynthesis; adenosylcobalamin from cob(II)yrinate a,c-diamide: step 7/7. Its function is as follows. Joins adenosylcobinamide-GDP and alpha-ribazole to generate adenosylcobalamin (Ado-cobalamin). Also synthesizes adenosylcobalamin 5'-phosphate from adenosylcobinamide-GDP and alpha-ribazole 5'-phosphate. The chain is Adenosylcobinamide-GDP ribazoletransferase from Clostridium botulinum (strain Eklund 17B / Type B).